The primary structure comprises 232 residues: Phosphatidylserine decarboxylase proenzyme (232 aa).

S190 (schiff-base intermediate with substrate; via pyruvic acid) is an active-site residue. Pyruvic acid (Ser); by autocatalysis is present on S190.

This sequence belongs to the phosphatidylserine decarboxylase family. PSD-A subfamily. In terms of assembly, heterodimer of a large membrane-associated beta subunit and a small pyruvoyl-containing alpha subunit. The cofactor is pyruvate. In terms of processing, is synthesized initially as an inactive proenzyme. Formation of the active enzyme involves a self-maturation process in which the active site pyruvoyl group is generated from an internal serine residue via an autocatalytic post-translational modification. Two non-identical subunits are generated from the proenzyme in this reaction, and the pyruvate is formed at the N-terminus of the alpha chain, which is derived from the carboxyl end of the proenzyme. The post-translation cleavage follows an unusual pathway, termed non-hydrolytic serinolysis, in which the side chain hydroxyl group of the serine supplies its oxygen atom to form the C-terminus of the beta chain, while the remainder of the serine residue undergoes an oxidative deamination to produce ammonia and the pyruvoyl prosthetic group on the alpha chain.

Its subcellular location is the cell membrane. It catalyses the reaction a 1,2-diacyl-sn-glycero-3-phospho-L-serine + H(+) = a 1,2-diacyl-sn-glycero-3-phosphoethanolamine + CO2. The protein operates within phospholipid metabolism; phosphatidylethanolamine biosynthesis; phosphatidylethanolamine from CDP-diacylglycerol: step 2/2. Catalyzes the formation of phosphatidylethanolamine (PtdEtn) from phosphatidylserine (PtdSer). In Rhizobium leguminosarum bv. trifolii (strain WSM2304), this protein is Phosphatidylserine decarboxylase proenzyme.